We begin with the raw amino-acid sequence, 211 residues long: Putative ATP-dependent Clp protease proteolytic subunit-like (211 aa).

The disordered stretch occupies residues 1–24; it reads MTRPSARHVLPEFTERTSAGTRTS. His129 is a catalytic residue.

It belongs to the peptidase S14 family.

In terms of biological role, has lost one of the conserved residue (Ser) proposed to be part of the active site. Therefore it could be inactive. The polypeptide is Putative ATP-dependent Clp protease proteolytic subunit-like (Streptomyces coelicolor (strain ATCC BAA-471 / A3(2) / M145)).